Here is a 175-residue protein sequence, read N- to C-terminus: Large ribosomal subunit protein bL9 (175 aa).

It belongs to the bacterial ribosomal protein bL9 family.

Functionally, binds to the 23S rRNA. This is Large ribosomal subunit protein bL9 from Orientia tsutsugamushi (strain Boryong) (Rickettsia tsutsugamushi).